An 83-amino-acid polypeptide reads, in one-letter code: ATP synthase subunit 9, mitochondrial (83 aa).

The next 2 helical transmembrane spans lie at 8–28 (IGAGAATIASAGAAIGIGNVL) and 45–72 (SFGYAILGFALTEAIASFAPMMAFLISS).

The protein belongs to the ATPase C chain family. F-type ATPases have 2 components, CF(1) - the catalytic core - and CF(0) - the membrane proton channel. CF(1) has five subunits: alpha(3), beta(3), gamma(1), delta(1), epsilon(1). CF(0) has three main subunits: a, b and c.

It is found in the mitochondrion membrane. In terms of biological role, this protein is one of the chains of the nonenzymatic membrane component (F0) of mitochondrial ATPase. The polypeptide is ATP synthase subunit 9, mitochondrial (ATP9) (Helianthus annuus (Common sunflower)).